A 2070-amino-acid chain; its full sequence is Multiple PDZ domain protein (2070 aa).

An L27 domain is found at 1-63 (MLEAIDKNRA…SVQQLKDQVN (63 aa)). Positions 137–224 (VFELLKPPSG…TVQLVIARGS (88 aa)) constitute a PDZ 1 domain. Residue S230 is modified to Phosphoserine. 2 PDZ domains span residues 257–337 (TIEL…ARGA) and 377–463 (DVEL…MRRG). Position 483 is a phosphoserine (S483). PDZ domains follow at residues 553-634 (VAHV…CRRT) and 700-786 (HIEL…VAKP). S790 and S1078 each carry phosphoserine. Residues 1008–1089 (TINIAKGNSS…IGPDIKITYV (82 aa)) enclose the PDZ 6 domain. Positions 1121-1140 (DIPELPEREEGEGEESELQN) are disordered. Positions 1151–1243 (RVELWREPSK…PVVFMVQSII (93 aa)) constitute a PDZ 7 domain. R1170 is modified (omega-N-methylarginine). The tract at residues 1278–1324 (ADKAPSQSESEPEKAPLCSVPPPPPSAFAEMGSDHTQSSASKISQDV) is disordered. A compositionally biased stretch (polar residues) spans 1311-1321 (DHTQSSASKIS). PDZ domains are found at residues 1350–1433 (MIEL…IRNK) and 1483–1564 (HLEL…HAEN). A disordered region spans residues 1567-1612 (SQAVPSAAGAASGEKKNSSQSLMVPQSGSPEPESIRNTSRSSTPAI). Residues 1584 to 1610 (SSQSLMVPQSGSPEPESIRNTSRSSTP) are compositionally biased toward polar residues. PDZ domains lie at 1629–1712 (TIEI…YRDE) and 1725–1807 (TIEL…GRIK). Residues S1818 and S1824 each carry the phosphoserine modification. PDZ domains are found at residues 1862-1948 (TVEM…VAGG) and 1987-2070 (SITL…MVLS).

In terms of assembly, interacts with CLDN5, DLG4, GRIN1, F11R/JAM, CLDN1, NG2, CRB1, MPP4 and PALS1. Interacts with HTR2A, HTR2B, HTR2C, PLEKHA1/TAPP1, PLEKHA2/TAPP2, CXADR, SYNGAP1, CAMK2A and CAMK2B. Interacts with FAT4 (via cytoplasmic domain). Interacts with DLL1. (Microbial infection) Interacts with human adenovirus type 9 E4-ORF1 protein. As to quaternary structure, (Microbial infection) Interacts with human papillomavirus 18/HPV18 protein E6. In terms of tissue distribution, expressed in heart, brain, placenta, liver, skeletal muscle, kidney and pancreas.

The protein localises to the cell membrane. The protein resides in the apical cell membrane. It localises to the postsynaptic density. It is found in the cell projection. Its subcellular location is the dendrite. The protein localises to the cell junction. The protein resides in the tight junction. It localises to the synapse. It is found in the synaptosome. In terms of biological role, member of the NMDAR signaling complex that may play a role in control of AMPAR potentiation and synaptic plasticity in excitatory synapses. Promotes clustering of HT2RC at the cell surface. The sequence is that of Multiple PDZ domain protein (MPDZ) from Homo sapiens (Human).